A 232-amino-acid chain; its full sequence is U2 small nuclear ribonucleoprotein B'' (232 aa).

Positions Q10–T89 constitute an RRM 1 domain. Positions D92–I159 are disordered. Basic and acidic residues predominate over residues K108 to E123. Over residues S127–E151 the composition is skewed to polar residues. In terms of domain architecture, RRM 2 spans N158 to K232.

The protein belongs to the RRM U1 A/B'' family. Component of the spliceosome where it is associated with snRNP U2.

It localises to the nucleus. Its subcellular location is the cajal body. It is found in the nucleoplasm. The protein localises to the cytoplasm. Involved in nuclear pre-mRNA splicing. The sequence is that of U2 small nuclear ribonucleoprotein B'' from Oryza sativa subsp. indica (Rice).